The primary structure comprises 2752 residues: MVFEKENKTCMKDVRYDLQEREKEEEEKKRNYNISNNNNNNNYNKYDKNYISHVADYINRKQINNMNDNNMNKSCIMKRFNKKDVKYNDMLLKADETYINDGQIKKKYNNNNNNNNNNTKSIYLTNTYNKSSSIHNKPHIHKNNDINNIHEKNDKSNNDYNYSHNNISFDYNVEPVYNYINEGHNPDISLNKMEIQKGTYNNYCYENFIVNDDVDSYRDTHENNIMLLDDENNNSIFIKKNKSSFYHTSQHNNQGFINTNDTIKRNKNFVLQKNDINLTNDKINSSFNKKKNKLTSIYVEREDQKVGPLNVNNDMSILNKKKESKHNFYKSMNEHDVIAEKKKNTILKNKCVEDDNIRTIENVHNDSLKNEHMNDIYMKDNNNNINTYKIVHDKPLSAVENLQEVNKKKNYKNVIFKHLFNNDKDDNVYNLKKNKNNDVVEFNMNKKMTLISGNKMYKNETAKMYNSNQEIYISNNNNDNNNDNNNDNNINNYHHGYKKYNTTNQYNNNNNNNNNSNIYPFYKNTSINNCNNKKINEYDNNLFNNKKDILNNTNFVKSQDYHDNKNIQYNINSNDNYYHSFGDIKNEGNMNTMFNVKKKYKKVRINSHISSKLNDKSIINYRNGVINNQFNHMNDIVSSNNNNNNNNNNNNNNNNNNNNNNNNNNNNNNNNNNNINMKTSICNNKKRKNTKNFSLNLCSACLNIDDKIYIKQIKEILDRDINLLNEDPRIINALKKSHISTSYLFNNLKSLGTFRKGGLTWAIYYNNNNKGVNNMIKIKNEANNRIVKDKLLNNMNCTNIMNDIKNINTLATNNGGGYNLNNVNNMSNIYNVVDAKNGNHMNNRKDMSINTDCFNYTNSIDEMDDINENNKKKDNFPFLNNSNIDSDNNYIELIKNNSFCNDKYIIEPIIENTWLKKVLLIIKKESLDIECFLFKIKYYFYKSVLFLYQEGIKSYLGDVANQMKIYINYNFWSAAEIAFILRQITSLCNIQIEVRVKGEIGCVIYLNEEPEWFQGFVDSHNLNDTFSKKDWYLLNNFAIKMMQYRKGDKKSEDMKEDTPTRGENLQRGQNLQRGDNLQRGDNLQRGDNLQRGDNLQNGDNLQNGDNLQRGDNLQNGENLQSGENLQSGENLQSGENLQTRENLQSGENLQTRENLQSDENHNNILYPYNNNGQYEDNYNNSYNNNNNECIFCSSSNKKLKSYMFNGGRYAFAAKLKEEIKHFHSKRLGDIIHLVQLAIHKGIFVYSQRILLPVSACEKSADDLYPKIRNLNYDICETLEEVLEIISLLVDHKTNGLVLAQLKQQFILQFKKELNSLHFGYKKLQNLLMAEPFNKYYKLYIPNNNLHRTHIQHKKYKTPDNCRIFQKENIHLKNHLDFIYNTEFFTELYVEDEYYDNEDTKQSIQPIYDNIISTSCNNHIQQQNGSLYMSNTTFRNDKEEIKKDIYLLNIRDSQNKRDIKQDNISKKKINNINSNNSNNSNSNSNSNNNNNNNYNSNNISDNKLELTYQNIHNLPSYIQKSIETIFEKNNKENDKSKWIEEEEEEKEECPLKEINKNIQHNKNYDYIINNNIFQNRGSNNIQSYDDRNQNKQIQFLNTLYHIDVELSPVNTKRYNKIKDIFTNMIKINKKCNDNIINNDDIIKNDHDEFINDDQHYNIWNVHFEKRTLLNRYKQDNTTGATNVVSPILNIYTLIKKYKIKKKKYESFFDDINNDVDIHVNNKTEQNKDNGHIENNNINNINNNINNINNNINNINNNINNINNNVNNYYYIDNGDGNNIHKGYINNYIIPEDNPIHNNFTYDNNKKNTTKQTLQLLHNTEINFIPDIDPIDVTNVNINRKNKMNKIYKTKNVINRHHTNKSMETFEPNNKLDSYEDRNIQFYNENCNRYMNADYKTGQSTLPILSGTTNNIRYKTGESTLPILSGTTNNTRYKTGESTLPILSGTTNNTRYKTERFFKAKNSNQENINQNEINYNNNDDDDDNNNNNNDDDDDDNNYYMLNNQYGDNIMTESNYISSHNNLPQEDIFNDEKKIIEMIEKTIDQDYINIEDKNDVKHDMIKKINKRKNNNIHNYNDNNNDNNNDNNNDNNNDNNNDNNNDKYFIFDKDINNNVDENNINNIHLKDNIKKKKEKNEYNNYKISSYNNNDGDNYGDNNNNLINNSIYYYDSSKNRSIKYGDEYEEEIYNTKNVINQKNYGNINNYDYNVIFTNIAQVNDENLYIPNSRSINIDINDTDNNNCVKNITYINNNSNPLESNNNGSTTTTTTTTSIKNNMKHYNVDINNLDDIKDIYMYNSNNNDSTNVERDNNNINIEHVGEKPFCYYTHNYNNNVSNINFNTFNPSLNLIMNNPKKNNDQNSIFKKEQYSSYEPVKNNDINIFYSNKYDNNSNYIYEQKIKKNENDVIYKNDDKIFSNLNKSEECVHSSNSFVNNLYIPYNNMKDKDNIMSPQNNIIYDEQINNINNFTLNNHNMNNGHNIGDEYSDESYEIRHINNINKKDNLMDENNILNNNNDNNNNNNDKSNLVLHNNNDKSNHFLHNNNNDSYNYDIYNHFHTYNNCNLYNDDKNELSKKGAVLNRYNEQEQNIPIEHEYNNISYPSLIKNNKNNSEKKYLDNLSINLKDEKNYHPEKKNFNNNLEKNNKIFTNDIEHISFNKKICKIKNIYSENKNNQFFKNNTNHLFNTNINLYEKKNYVDDEFSHHKDPIKFSSLIKNKQNNNNSFMNLLNDNQYVKINNQNTFNNPNKYHHMKNKINK.

Positions 20–30 are enriched in basic and acidic residues; sequence EREKEEEEKKR. Disordered regions lie at residues 20–44, 139–160, 634–678, 1048–1130, and 1153–1172; these read EREKEEEEKKRNYNISNNNNNNNYN, HIHKNNDINNIHEKNDKSNNDY, NDIV…INMK, DKKS…SGEN, and ENLQSDENHNNILYPYNNNG. A compositionally biased stretch (low complexity) spans 32 to 44; sequence YNISNNNNNNNYN. Residues 142–157 are compositionally biased toward basic and acidic residues; the sequence is KNNDINNIHEKNDKSN. Low complexity predominate over residues 640 to 674; sequence NNNNNNNNNNNNNNNNNNNNNNNNNNNNNNNNNNN. The span at 1048 to 1060 shows a compositional bias: basic and acidic residues; the sequence is DKKSEDMKEDTPT. Residues 1061–1075 show a composition bias toward polar residues; the sequence is RGENLQRGQNLQRGD. Positions 1076–1090 are enriched in basic and acidic residues; the sequence is NLQRGDNLQRGDNLQ. Positions 1091–1130 are enriched in polar residues; the sequence is RGDNLQNGDNLQNGDNLQRGDNLQNGENLQSGENLQSGEN. Residues 1162–1172 are compositionally biased toward low complexity; that stretch reads NNILYPYNNNG. An HTH OST-type domain is found at 1277–1354; it reads TLEEVLEIIS…LHRTHIQHKK (78 aa). 4 disordered regions span residues 1457-1499, 1958-1999, 2063-2099, and 2501-2537; these read DIKQ…NNIS, AKNS…YYML, KRKNNNIHNYNDNNNDNNNDNNNDNNNDNNNDNNNDK, and DENNILNNNNDNNNNNNDKSNLVLHNNNDKSNHFLHN. Composition is skewed to low complexity over residues 1469–1499 and 1962–1975; these read NNINSNNSNNSNSNSNSNNNNNNNYNSNNIS and NQENINQNEINYNN. Positions 1976 to 1994 are enriched in acidic residues; the sequence is NDDDDDNNNNNNDDDDDDN. 2 stretches are compositionally biased toward low complexity: residues 2068–2095 and 2501–2526; these read NIHNYNDNNNDNNNDNNNDNNNDNNNDN and DENNILNNNNDNNNNNNDKSNLVLHN.

The polypeptide is Protein PFF0380w (Plasmodium falciparum (isolate 3D7)).